The following is an 82-amino-acid chain: ATP synthase subunit c, chloroplastic (82 aa).

A run of 2 helical transmembrane segments spans residues P3–G23 and L57–A77.

The protein belongs to the ATPase C chain family. As to quaternary structure, F-type ATPases have 2 components, F(1) - the catalytic core - and F(0) - the membrane proton channel. F(1) has five subunits: alpha(3), beta(3), gamma(1), delta(1), epsilon(1). F(0) has four main subunits: a(1), b(1), b'(1) and c(10-14). The alpha and beta chains form an alternating ring which encloses part of the gamma chain. F(1) is attached to F(0) by a central stalk formed by the gamma and epsilon chains, while a peripheral stalk is formed by the delta, b and b' chains.

The protein localises to the plastid. Its subcellular location is the chloroplast thylakoid membrane. Functionally, f(1)F(0) ATP synthase produces ATP from ADP in the presence of a proton or sodium gradient. F-type ATPases consist of two structural domains, F(1) containing the extramembraneous catalytic core and F(0) containing the membrane proton channel, linked together by a central stalk and a peripheral stalk. During catalysis, ATP synthesis in the catalytic domain of F(1) is coupled via a rotary mechanism of the central stalk subunits to proton translocation. In terms of biological role, key component of the F(0) channel; it plays a direct role in translocation across the membrane. A homomeric c-ring of between 10-14 subunits forms the central stalk rotor element with the F(1) delta and epsilon subunits. The chain is ATP synthase subunit c, chloroplastic from Phaeodactylum tricornutum (strain CCAP 1055/1).